We begin with the raw amino-acid sequence, 547 residues long: CTP synthase (547 aa).

The segment at 1 to 273 (MNNKKLKSKF…DHFILNHFQL (273 aa)) is amidoligase domain. A CTP-binding site is contributed by serine 19. Position 19 (serine 19) interacts with UTP. An ATP-binding site is contributed by 20-25 (SLGKGI). Tyrosine 60 is an L-glutamine binding site. An ATP-binding site is contributed by aspartate 77. The Mg(2+) site is built by aspartate 77 and glutamate 147. Residues 154 to 156 (DIE), 194 to 199 (KTKPTQ), and lysine 230 contribute to the CTP site. Residues 194–199 (KTKPTQ) and lysine 230 each bind UTP. In terms of domain architecture, Glutamine amidotransferase type-1 spans 306–539 (YVILHDAYLS…VEAALLKNGK (234 aa)). Glycine 361 is a binding site for L-glutamine. Catalysis depends on cysteine 388, which acts as the Nucleophile; for glutamine hydrolysis. L-glutamine-binding positions include 389 to 392 (FGMQ), glutamate 412, and arginine 466. Active-site residues include histidine 512 and glutamate 514.

Belongs to the CTP synthase family. As to quaternary structure, homotetramer.

The enzyme catalyses UTP + L-glutamine + ATP + H2O = CTP + L-glutamate + ADP + phosphate + 2 H(+). The catalysed reaction is L-glutamine + H2O = L-glutamate + NH4(+). It catalyses the reaction UTP + NH4(+) + ATP = CTP + ADP + phosphate + 2 H(+). The protein operates within pyrimidine metabolism; CTP biosynthesis via de novo pathway; CTP from UDP: step 2/2. Its activity is regulated as follows. Allosterically activated by GTP, when glutamine is the substrate; GTP has no effect on the reaction when ammonia is the substrate. The allosteric effector GTP functions by stabilizing the protein conformation that binds the tetrahedral intermediate(s) formed during glutamine hydrolysis. Inhibited by the product CTP, via allosteric rather than competitive inhibition. Functionally, catalyzes the ATP-dependent amination of UTP to CTP with either L-glutamine or ammonia as the source of nitrogen. Regulates intracellular CTP levels through interactions with the four ribonucleotide triphosphates. The chain is CTP synthase from Phytoplasma australiense.